Consider the following 162-residue polypeptide: uncharacterized protein (162 aa).

The protein belongs to the M.jannaschii MJ0150/MJ0739/MJ0745/MJ1460/MJ1642 family.

This is an uncharacterized protein from Methanocaldococcus jannaschii (strain ATCC 43067 / DSM 2661 / JAL-1 / JCM 10045 / NBRC 100440) (Methanococcus jannaschii).